The primary structure comprises 339 residues: DNA-directed RNA polymerase subunit alpha (339 aa).

Positions 1–235 are alpha N-terminal domain (alpha-NTD); sequence MVIQKNWQEL…DQLQVFVNFE (235 aa). Residues 251-339 are alpha C-terminal domain (alpha-CTD); the sequence is FNPALLKKVD…DLAKRFEEHY (89 aa).

The protein belongs to the RNA polymerase alpha chain family. In terms of assembly, homodimer. The RNAP catalytic core consists of 2 alpha, 1 beta, 1 beta' and 1 omega subunit. When a sigma factor is associated with the core the holoenzyme is formed, which can initiate transcription.

The catalysed reaction is RNA(n) + a ribonucleoside 5'-triphosphate = RNA(n+1) + diphosphate. In terms of biological role, DNA-dependent RNA polymerase catalyzes the transcription of DNA into RNA using the four ribonucleoside triphosphates as substrates. The protein is DNA-directed RNA polymerase subunit alpha of Methylorubrum populi (strain ATCC BAA-705 / NCIMB 13946 / BJ001) (Methylobacterium populi).